We begin with the raw amino-acid sequence, 246 residues long: DNA repair protein RecO (246 aa).

This sequence belongs to the RecO family.

In terms of biological role, involved in DNA repair and RecF pathway recombination. The polypeptide is DNA repair protein RecO (Methylobacterium nodulans (strain LMG 21967 / CNCM I-2342 / ORS 2060)).